The chain runs to 392 residues: Serine protease ea (392 aa).

The first 19 residues, 1–19 (MLKPSIICLFLGILAKSSA), serve as a signal peptide directing secretion. A propeptide spans 20-127 (GQFYFPNEAA…GQCGNILSNR (108 aa)) (activation peptide). The Clip domain maps to 36 to 89 (RCITPNRERALCIHLEDCKYLYGLLTTTPLRDTDRLYLSRSQCGYTNGKVLICC). Disulfide bonds link cysteine 37–cysteine 88, cysteine 47–cysteine 78, and cysteine 53–cysteine 89. N-linked (GlcNAc...) asparagine glycosylation is present at asparagine 107. Intrachain disulfides connect cysteine 120–cysteine 260, cysteine 158–cysteine 174, cysteine 202–cysteine 212, cysteine 307–cysteine 324, and cysteine 334–cysteine 367. Positions 128–391 (IYGGMKTKID…YVDWIQNTIE (264 aa)) constitute a Peptidase S1 domain. The Charge relay system role is filled by histidine 173. Ca(2+)-binding residues include glutamate 193, aspartate 195, threonine 198, and aspartate 201. The Charge relay system role is filled by aspartate 240. Catalysis depends on serine 338, which acts as the Charge relay system.

It belongs to the peptidase S1 family. CLIP subfamily. In terms of assembly, interacts with Spn27A; the two proteins are covalently linked leading to inhibition of ea catalytic activity. Interacts (via Peptidase domain) with snk (via N-terminal prodomain); leads to proteolytic activation of ea by snk. Sulfation of a vitelline membrane component by pip is required for proteolytic cleavage of ea by snk but not for the interaction of ea with snk. In terms of processing, proteolytically cleaved by snk. Activation peptide and active catalytic domain remain associated by a disulfide bond. Processed ea/easter is present in extremely low amounts in the early embryo as it is rapidly converted into a high molecular mass complex made up of ea covalently bound to the serpin Spn27A. Zymogen activation is also controlled by a negative feedback loop from Dorsal.

It is found in the secreted. Activated proteolytically by snk; activation requires both activation of the ndl-gd-snk protease cascade and sulfation of a vitelline membrane component by pip. Inhibited by binding of the serpin Spn27A. Functionally, component of the extracellular signaling pathway that establishes the dorsal-ventral pathway of the embryo. A protease cascade involving ndl, gd, snk and ea results in activation of the spz Toll receptor ligand; acts downstream of ndl, gd and snk and is required for proteolytic processing of spz. Activation of ea requires both activation of the ndl-gd-snk protease cascade and sulfation of a vitelline membrane component by pip. Localized activation of the Toll receptor in the ventral region of the embryo defines cell identities along the dorsal-ventral continuum. This is Serine protease ea from Drosophila melanogaster (Fruit fly).